A 524-amino-acid chain; its full sequence is Translation initiation factor eIF2B subunit delta (524 aa).

The interval 1–173 is disordered; that stretch reads MATAAVAVRE…ERQQVPTRKD (173 aa). A2 is modified (N-acetylalanine). Residue S12 is modified to Phosphoserine. The span at 26–40 shows a compositional bias: basic and acidic residues; sequence AEGREMTQEEKLQLR. A compositionally biased stretch (basic residues) spans 41–51; that stretch reads KEKKQQKKKRK. Phosphothreonine is present on T86. Basic and acidic residues-rich tracts occupy residues 87–121 and 161–173; these read AKEKVPAGRSKAELRAERRAKQEAERAMKQARKGD and KKPERQQVPTRKD. The segment at 171–180 is may bind the chemical integrated stress response (ISR) inhibitor ISRIB; sequence RKDYGSKVSL.

The protein belongs to the eIF-2B alpha/beta/delta subunits family. As to quaternary structure, component of the translation initiation factor 2B (eIF2B) complex which is a heterodecamer of two sets of five different subunits: alpha, beta, gamma, delta and epsilon. Subunits alpha, beta and delta comprise a regulatory subcomplex and subunits epsilon and gamma comprise a catalytic subcomplex. Within the complex, the hexameric regulatory complex resides at the center, with the two heterodimeric catalytic subcomplexes bound on opposite sides.

It is found in the cytoplasm. It localises to the cytosol. Its activity is regulated as follows. Activated by the chemical integrated stress response (ISR) inhibitor ISRIB which stimulates guanine nucleotide exchange factor activity for both phosphorylated and unphosphorylated eIF2. Its function is as follows. Acts as a component of the translation initiation factor 2B (eIF2B) complex, which catalyzes the exchange of GDP for GTP on eukaryotic initiation factor 2 (eIF2) gamma subunit. Its guanine nucleotide exchange factor activity is repressed when bound to eIF2 complex phosphorylated on the alpha subunit, thereby limiting the amount of methionyl-initiator methionine tRNA available to the ribosome and consequently global translation is repressed. This Bos taurus (Bovine) protein is Translation initiation factor eIF2B subunit delta (EIF2B4).